A 383-amino-acid chain; its full sequence is Sterol 24-C-methyltransferase ERG6 (383 aa).

At Ser-2 the chain carries N-acetylserine. The residue at position 99 (Ser-99) is a Phosphoserine.

This sequence belongs to the class I-like SAM-binding methyltransferase superfamily. Erg6/SMT family. Interacts with ERG28.

The protein localises to the microsome. Its subcellular location is the mitochondrion. It catalyses the reaction zymosterol + S-adenosyl-L-methionine = fecosterol + S-adenosyl-L-homocysteine + H(+). The protein operates within steroid metabolism; ergosterol biosynthesis; ergosterol from zymosterol: step 1/5. In terms of biological role, sterol 24-C-methyltransferase; part of the third module of ergosterol biosynthesis pathway that includes the late steps of the pathway. ERG6 catalyzes the methyl transfer from S-adenosyl-methionine to the C-24 of zymosterol to form fecosterol. The third module or late pathway involves the ergosterol synthesis itself through consecutive reactions that mainly occur in the endoplasmic reticulum (ER) membrane. Firstly, the squalene synthase ERG9 catalyzes the condensation of 2 farnesyl pyrophosphate moieties to form squalene, which is the precursor of all steroids. Squalene synthase is crucial for balancing the incorporation of farnesyl diphosphate (FPP) into sterol and nonsterol isoprene synthesis. Secondly, the squalene epoxidase ERG1 catalyzes the stereospecific oxidation of squalene to (S)-2,3-epoxysqualene, which is considered to be a rate-limiting enzyme in steroid biosynthesis. Then, the lanosterol synthase ERG7 catalyzes the cyclization of (S)-2,3 oxidosqualene to lanosterol, a reaction that forms the sterol core. In the next steps, lanosterol is transformed to zymosterol through a complex process involving various demethylation, reduction and desaturation reactions. The lanosterol 14-alpha-demethylase ERG11 (also known as CYP51) catalyzes C14-demethylation of lanosterol to produce 4,4'-dimethyl cholesta-8,14,24-triene-3-beta-ol, which is critical for ergosterol biosynthesis. The C-14 reductase ERG24 reduces the C14=C15 double bond of 4,4-dimethyl-cholesta-8,14,24-trienol to produce 4,4-dimethyl-cholesta-8,24-dienol. 4,4-dimethyl-cholesta-8,24-dienol is substrate of the C-4 demethylation complex ERG25-ERG26-ERG27 in which ERG25 catalyzes the three-step monooxygenation required for the demethylation of 4,4-dimethyl and 4alpha-methylsterols, ERG26 catalyzes the oxidative decarboxylation that results in a reduction of the 3-beta-hydroxy group at the C-3 carbon to an oxo group, and ERG27 is responsible for the reduction of the keto group on the C-3. ERG28 has a role as a scaffold to help anchor ERG25, ERG26 and ERG27 to the endoplasmic reticulum and ERG29 regulates the activity of the iron-containing C4-methylsterol oxidase ERG25. Then, the sterol 24-C-methyltransferase ERG6 catalyzes the methyl transfer from S-adenosyl-methionine to the C-24 of zymosterol to form fecosterol. The C-8 sterol isomerase ERG2 catalyzes the reaction which results in unsaturation at C-7 in the B ring of sterols and thus converts fecosterol to episterol. The sterol-C5-desaturase ERG3 then catalyzes the introduction of a C-5 double bond in the B ring to produce 5-dehydroepisterol. The C-22 sterol desaturase ERG5 further converts 5-dehydroepisterol into ergosta-5,7,22,24(28)-tetraen-3beta-ol by forming the C-22(23) double bond in the sterol side chain. Finally, ergosta-5,7,22,24(28)-tetraen-3beta-ol is substrate of the C-24(28) sterol reductase ERG4 to produce ergosterol. In Saccharomyces cerevisiae (strain ATCC 204508 / S288c) (Baker's yeast), this protein is Sterol 24-C-methyltransferase ERG6.